The chain runs to 505 residues: Maturase K (505 aa).

It belongs to the intron maturase 2 family. MatK subfamily.

It localises to the plastid. The protein resides in the chloroplast. Its function is as follows. Usually encoded in the trnK tRNA gene intron. Probably assists in splicing its own and other chloroplast group II introns. This is Maturase K from Kunzea ericoides (White teatree).